Reading from the N-terminus, the 240-residue chain is Flagellar L-ring protein (240 aa).

Positions methionine 1–glycine 20 are cleaved as a signal peptide. The N-palmitoyl cysteine moiety is linked to residue cysteine 21. The S-diacylglycerol cysteine moiety is linked to residue cysteine 21.

This sequence belongs to the FlgH family. The basal body constitutes a major portion of the flagellar organelle and consists of four rings (L,P,S, and M) mounted on a central rod.

The protein localises to the cell outer membrane. The protein resides in the bacterial flagellum basal body. In terms of biological role, assembles around the rod to form the L-ring and probably protects the motor/basal body from shearing forces during rotation. The sequence is that of Flagellar L-ring protein from Sulfurimonas denitrificans (strain ATCC 33889 / DSM 1251) (Thiomicrospira denitrificans (strain ATCC 33889 / DSM 1251)).